The following is a 262-amino-acid chain: Alpha-tubulin N-acetyltransferase 1 (262 aa).

In terms of domain architecture, N-acetyltransferase spans 1–177 (MQVDADLRPI…TNFVVFEELF (177 aa)). Residue 111-124 (FYVHFSCQRQGVGQ) participates in acetyl-CoA binding.

This sequence belongs to the acetyltransferase ATAT1 family. As to expression, expressed solely in touch receptor neurons.

The catalysed reaction is L-lysyl-[alpha-tubulin] + acetyl-CoA = N(6)-acetyl-L-lysyl-[alpha-tubulin] + CoA + H(+). Its function is as follows. Specifically acetylates 'Lys-40' in alpha-tubulin/mec-12 on the lumenal side of microtubules. Promotes microtubule destabilization and accelerates microtubule dynamics; this activity may be independent of acetylation activity. Acetylates alpha-tubulin with a slow enzymatic rate, due to a catalytic site that is not optimized for acetyl transfer. Enters the microtubule through each end and diffuses quickly throughout the lumen of microtubules. Acetylates only long/old microtubules because of its slow acetylation rate since it does not have time to act on dynamically unstable microtubules before the enzyme is released. Required for the maintenance of touch receptor neurons and possibly other type of neurons involved in locomotion. Regulates the number and localization of mitochondria in mechanosensory neurons. Plays a role in axonal transport. The chain is Alpha-tubulin N-acetyltransferase 1 from Caenorhabditis elegans.